A 108-amino-acid chain; its full sequence is UPF0145 protein YjfJ (108 aa).

It belongs to the UPF0145 family.

This Lactococcus lactis subsp. lactis (strain IL1403) (Streptococcus lactis) protein is UPF0145 protein YjfJ (yjfJ).